The following is a 442-amino-acid chain: Methionine aminopeptidase 2-1 (442 aa).

Residues 1 to 92 are disordered; that stretch reads MAAQASEELE…ISELFPNNQY (92 aa). Over residues 15–25 the composition is skewed to polar residues; the sequence is NGQNGHAQEQV. A compositionally biased stretch (acidic residues) spans 30–47; the sequence is EAADNDDSEDDEKEEEGG. Positions 56–72 are enriched in basic residues; that stretch reads AKKKKKRKPKKKKKGGA. Residue His-195 participates in substrate binding. Residues Asp-215, Asp-226, and His-295 each contribute to the a divalent metal cation site. His-303 provides a ligand contact to substrate. Glu-328 and Glu-423 together coordinate a divalent metal cation.

Belongs to the peptidase M24A family. Methionine aminopeptidase eukaryotic type 2 subfamily. Co(2+) is required as a cofactor. It depends on Zn(2+) as a cofactor. Requires Mn(2+) as cofactor. The cofactor is Fe(2+).

Its subcellular location is the cytoplasm. The enzyme catalyses Release of N-terminal amino acids, preferentially methionine, from peptides and arylamides.. Functionally, cotranslationally removes the N-terminal methionine from nascent proteins. The N-terminal methionine is often cleaved when the second residue in the primary sequence is small and uncharged (Met-Ala-, Cys, Gly, Pro, Ser, Thr, or Val). The sequence is that of Methionine aminopeptidase 2-1 from Talaromyces marneffei (strain ATCC 18224 / CBS 334.59 / QM 7333) (Penicillium marneffei).